Reading from the N-terminus, the 108-residue chain is uncharacterized protein (108 aa).

The segment at Thr75–Thr94 is disordered. The span at Ser79–Thr94 shows a compositional bias: low complexity.

This is an uncharacterized protein from Homo sapiens (Human).